The chain runs to 381 residues: Chymosin (381 aa).

The first 16 residues, 1–16, serve as a signal peptide directing secretion; that stretch reads MRCLVVLLAVFALSQG. Residues 17-58 constitute a propeptide, activation peptide; the sequence is AEITRIPLYKGKSLRKALKEHGLLEDFLQKQQYGISSKYSGF. One can recognise a Peptidase A1 domain in the interval 74–378; sequence YFGKIYLGTP…DRANNLVGLA (305 aa). Asp-92 is an active-site residue. 2 disulfide bridges follow: Cys-105/Cys-110 and Cys-265/Cys-269. Asp-274 is a catalytic residue. The cysteines at positions 308 and 341 are disulfide-linked.

The protein belongs to the peptidase A1 family. In terms of assembly, monomer.

It catalyses the reaction Broad specificity similar to that of pepsin A. Clots milk by cleavage of a single 104-Ser-Phe-|-Met-Ala-107 bond in kappa-chain of casein.. Chymosin is synthesized in the mucosa of the abomasum (fourth stomach) of young (unweaned) ruminants. The enzyme hydrolyzes casein to paracasein. The chain is Chymosin (CYM) from Bos taurus (Bovine).